A 125-amino-acid chain; its full sequence is UPF0102 protein PSPA7_4996 (125 aa).

This sequence belongs to the UPF0102 family.

The protein is UPF0102 protein PSPA7_4996 of Pseudomonas paraeruginosa (strain DSM 24068 / PA7) (Pseudomonas aeruginosa (strain PA7)).